We begin with the raw amino-acid sequence, 81 residues long: Large ribosomal subunit protein uL24 (81 aa).

The protein belongs to the universal ribosomal protein uL24 family. In terms of assembly, part of the 50S ribosomal subunit.

One of two assembly initiator proteins, it binds directly to the 5'-end of the 23S rRNA, where it nucleates assembly of the 50S subunit. Its function is as follows. One of the proteins that surrounds the polypeptide exit tunnel on the outside of the subunit. The polypeptide is Large ribosomal subunit protein uL24 (Chloroherpeton thalassium (strain ATCC 35110 / GB-78)).